The chain runs to 157 residues: NudC domain-containing protein 2 (157 aa).

Residue Ser2 is modified to N-acetylserine. In terms of domain architecture, CS spans 14 to 104 (CGTPWGQWYQ…DAANCWTSLL (91 aa)). A disordered region spans residues 134-157 (FDFSGAEISGNYTKGGPDFSNLEK). Phosphoserine is present on Ser142. Residue Tyr145 is modified to Phosphotyrosine.

As to quaternary structure, interacts with LIS1.

Its subcellular location is the chromosome. It is found in the centromere. The protein localises to the kinetochore. It localises to the cytoplasm. The protein resides in the cytoskeleton. Its subcellular location is the microtubule organizing center. It is found in the centrosome. The protein localises to the spindle pole. May regulate the LIS1/dynein pathway by stabilizing LIS1 with Hsp90 chaperone. The protein is NudC domain-containing protein 2 (Nudcd2) of Mus musculus (Mouse).